The primary structure comprises 146 residues: Superoxide dismutase [Mn] 2 (146 aa).

Residues His-42, Asp-126, and His-130 each contribute to the Mn(2+) site.

The protein belongs to the iron/manganese superoxide dismutase family. The cofactor is Mn(2+).

It carries out the reaction 2 superoxide + 2 H(+) = H2O2 + O2. Destroys superoxide anion radicals which are normally produced within the cells and which are toxic to biological systems. The polypeptide is Superoxide dismutase [Mn] 2 (sod2) (Haloferax mediterranei (Halobacterium mediterranei)).